We begin with the raw amino-acid sequence, 511 residues long: 2-isopropylmalate synthase (511 aa).

The Pyruvate carboxyltransferase domain occupies 5-267 (LFIFDTTLRD…DTRIDATQIV (263 aa)). D14, H202, H204, and N238 together coordinate Mn(2+). Residues 393-511 (KLLSMKVCSE…SKRERAHPQV (119 aa)) form a regulatory domain region.

It belongs to the alpha-IPM synthase/homocitrate synthase family. LeuA type 1 subfamily. In terms of assembly, homodimer. Mn(2+) is required as a cofactor.

The protein localises to the cytoplasm. It catalyses the reaction 3-methyl-2-oxobutanoate + acetyl-CoA + H2O = (2S)-2-isopropylmalate + CoA + H(+). The protein operates within amino-acid biosynthesis; L-leucine biosynthesis; L-leucine from 3-methyl-2-oxobutanoate: step 1/4. Its function is as follows. Catalyzes the condensation of the acetyl group of acetyl-CoA with 3-methyl-2-oxobutanoate (2-ketoisovalerate) to form 3-carboxy-3-hydroxy-4-methylpentanoate (2-isopropylmalate). This is 2-isopropylmalate synthase from Thiobacillus denitrificans (strain ATCC 25259 / T1).